A 368-amino-acid chain; its full sequence is uncharacterized protein (368 aa).

Might be involved in sporulation. This is an uncharacterized protein from Brachyspira hyodysenteriae (strain ATCC 49526 / WA1).